A 392-amino-acid chain; its full sequence is Cobalt-precorrin-5B C(1)-methyltransferase (392 aa).

This sequence belongs to the CbiD family.

The enzyme catalyses Co-precorrin-5B + S-adenosyl-L-methionine = Co-precorrin-6A + S-adenosyl-L-homocysteine. The protein operates within cofactor biosynthesis; adenosylcobalamin biosynthesis; cob(II)yrinate a,c-diamide from sirohydrochlorin (anaerobic route): step 6/10. Catalyzes the methylation of C-1 in cobalt-precorrin-5B to form cobalt-precorrin-6A. This is Cobalt-precorrin-5B C(1)-methyltransferase from Pelobacter propionicus (strain DSM 2379 / NBRC 103807 / OttBd1).